Consider the following 134-residue polypeptide: Profilin-2 (134 aa).

A disulfide bridge connects residues Cys-13 and Cys-118. The Involved in PIP2 interaction motif lies at 84–100; it reads AVIRGKKGSGGITIKKT. Residue Thr-114 is modified to Phosphothreonine.

Belongs to the profilin family. Occurs in many kinds of cells as a complex with monomeric actin in a 1:1 ratio. Phosphorylated by MAP kinases.

Its subcellular location is the cytoplasm. The protein resides in the cytoskeleton. Functionally, binds to actin and affects the structure of the cytoskeleton. At high concentrations, profilin prevents the polymerization of actin, whereas it enhances it at low concentrations. The chain is Profilin-2 from Olea europaea (Common olive).